Reading from the N-terminus, the 196-residue chain is MLKEVVYCGVCTYPIDYCEFSGKLKRCKVWLKENHADLYDKLYSEDDAAAASLSAKLAESSIGEAREEKLEKDLQKLQTKQENKEQRELAKKLSSKVIVKREARTKRKYIVAISGLEVFEIDMKKLAKTFASKFATGCSVSKNAEKKEEVVVQGDVLDEVVAYIHSLLEEKGMKDVKVETIDTKKKKKPEATPAAK.

The SUI1 domain occupies 97–168 (VIVKREARTK…EVVAYIHSLL (72 aa)).

This sequence belongs to the DENR family. Interacts with the 40S ribosomal subunit.

It localises to the cytoplasm. In Candida glabrata (strain ATCC 2001 / BCRC 20586 / JCM 3761 / NBRC 0622 / NRRL Y-65 / CBS 138) (Yeast), this protein is Translation machinery-associated protein 22 (TMA22).